We begin with the raw amino-acid sequence, 194 residues long: Porimin (194 aa).

The signal sequence occupies residues 1–24 (MALCARAALLLGALQVLALPGAVA). The Extracellular segment spans residues 25–151 (QETYAQGSPS…PTKGKGSKFD (127 aa)). N-linked (GlcNAc...) asparagine glycans are attached at residues asparagine 36, asparagine 47, asparagine 51, asparagine 59, asparagine 76, and asparagine 114. Positions 88-124 (KVSTPGVSPHVTPSASKSTPKTSASPNSTQTSASMTT) are disordered. A compositionally biased stretch (low complexity) spans 99–124 (TPSASKSTPKTSASPNSTQTSASMTT). The chain crosses the membrane as a helical span at residues 152-172 (AGSFVGGIVLTLGVLSILYIG). The Cytoplasmic segment spans residues 173-194 (CKMYYSRRGIRYRSIDEHDAII). Serine 186 carries the post-translational modification Phosphoserine.

It belongs to the CD164 family.

It localises to the membrane. Functionally, implicated in oncotic cell death, characterized by cell swelling, organelle swelling, vacuolization and increased membrane permeability. The polypeptide is Porimin (Tmem123) (Rattus norvegicus (Rat)).